The following is a 43-amino-acid chain: Cytochrome b559 subunit beta (43 aa).

The chain crosses the membrane as a helical span at residues 18-34 (WLSVHALGIPTIFFLGA). His-22 lines the heme pocket.

The protein belongs to the PsbE/PsbF family. As to quaternary structure, heterodimer of an alpha subunit and a beta subunit. PSII is composed of 1 copy each of membrane proteins PsbA, PsbB, PsbC, PsbD, PsbE, PsbF, PsbH, PsbI, PsbJ, PsbK, PsbL, PsbM, PsbT, PsbX, PsbY, PsbZ, Psb30/Ycf12, at least 3 peripheral proteins of the oxygen-evolving complex and a large number of cofactors. It forms dimeric complexes. The cofactor is heme b.

The protein localises to the plastid. It is found in the chloroplast thylakoid membrane. This b-type cytochrome is tightly associated with the reaction center of photosystem II (PSII). PSII is a light-driven water:plastoquinone oxidoreductase that uses light energy to abstract electrons from H(2)O, generating O(2) and a proton gradient subsequently used for ATP formation. It consists of a core antenna complex that captures photons, and an electron transfer chain that converts photonic excitation into a charge separation. The polypeptide is Cytochrome b559 subunit beta (Stigeoclonium helveticum (Green alga)).